The sequence spans 409 residues: Failed axon connections homolog (409 aa).

A helical transmembrane segment spans residues 68–88 (YLTGGALLAAAAYLLHELLVI). A disordered region spans residues 372-409 (DEGAENSFSRTPDTDFTGHSLFDSDVDMDDYTEHEQCK).

The protein belongs to the FAX family.

It localises to the membrane. Functionally, may play a role in axonal development. This Rattus norvegicus (Rat) protein is Failed axon connections homolog (Faxc).